The sequence spans 1729 residues: 182 kDa tankyrase-1-binding protein (1729 aa).

The span at 1–12 shows a compositional bias: polar residues; it reads MKVSTLRESSAM. Residues 1 to 151 are disordered; that stretch reads MKVSTLRESS…VRKAPAPFRP (151 aa). Phosphoserine is present on S14. The segment covering 46 to 63 has biased composition (low complexity); the sequence is ALPAKPALPAKPSLLVPV. Over residues 117 to 127 the composition is skewed to basic and acidic residues; that stretch reads TGKEEAGKEEP. T131 is modified (phosphothreonine). A phosphoserine mark is found at S178, S221, and S228. 3 disordered regions span residues 184-450, 484-603, and 657-880; these read GSRL…LAAL, PSGL…ESPL, and ETTQ…SSRD. The acidic stretch occupies residues 210 to 1572; that stretch reads DEDGSTLFRG…TEILDSAMYR (1363 aa). Over residues 230–245 the composition is skewed to basic and acidic residues; the sequence is AECREEHSKTPEERSL. At T239 the chain carries Phosphothreonine. S287 and S301 each carry phosphoserine. Residues 352–363 show a composition bias toward low complexity; the sequence is PSPGLPAEGAPE. Over residues 364–374 the composition is skewed to pro residues; that stretch reads APRPSSPPPEV. Residues S429, S435, S437, S494, and S498 each carry the phosphoserine modification. 3 stretches are compositionally biased toward low complexity: residues 500–512, 524–541, and 572–583; these read ITEA…AAEA, VSQQ…SGSS, and LPTTEGTPGLPL. T501 carries the phosphothreonine modification. Residues S601, S672, S691, S695, S712, S724, S744, S762, and S806 each carry the phosphoserine modification. Residues 738–753 show a composition bias toward polar residues; the sequence is PQPSSFSPSSWCQGAS. Residues 803–812 show a composition bias toward polar residues; the sequence is ASSSQDQSKV. T833 is modified (phosphothreonine). Phosphoserine occurs at positions 836, 851, 872, 877, 882, and 893. Basic and acidic residues predominate over residues 858 to 872; sequence RDAELQDQEFGKRDS. Residue Y897 is modified to Phosphotyrosine. The segment at 897–1083 is disordered; the sequence is YASQDANEQG…ADLEDGEMGK (187 aa). A phosphoserine mark is found at S899, S920, S936, and S976. T979 carries the phosphothreonine modification. A phosphoserine mark is found at S983, S987, S1004, S1008, S1013, S1024, S1029, S1054, S1073, S1091, S1103, S1133, S1138, S1158, S1178, S1248, and S1253. Over residues 1012-1021 the composition is skewed to basic and acidic residues; sequence GSRDAGRPGE. Positions 1043–1054 are enriched in polar residues; the sequence is RDQSSWQNSDAS. The disordered stretch occupies residues 1240-1302; sequence EVGEGGGHSQ…GAVCSPGESK (63 aa). T1282 carries the post-translational modification Phosphothreonine. Residues S1297, S1328, S1331, S1383, and S1385 each carry the phosphoserine modification. The segment at 1362 to 1561 is disordered; sequence AREHGVGGVS…SPSQDFSFIE (200 aa). A compositionally biased stretch (basic and acidic residues) spans 1389 to 1400; it reads EARDPLEARELG. Residues 1406-1419 show a composition bias toward polar residues; the sequence is GPETQGEDYSSSSL. Residues S1435, S1439, S1450, S1452, S1473, S1476, S1503, and S1506 each carry the phosphoserine modification. The tankyrase-binding stretch occupies residues 1450 to 1542; the sequence is SGSQGLLEEM…SDQGPAQTSR (93 aa). Residue T1518 is modified to Phosphothreonine. Phosphoserine occurs at positions 1533, 1545, and 1558. A Phosphothreonine modification is found at T1563. The disordered stretch occupies residues 1575 to 1729; that stretch reads ANLGRKRGHR…QALKLKKKKV (155 aa). The span at 1577–1586 shows a compositional bias: basic residues; sequence LGRKRGHRAP. The segment covering 1602 to 1615 has biased composition (basic and acidic residues); it reads SDAHLFQDSTEPRA. Phosphoserine occurs at positions 1620, 1621, and 1631. Residues 1629–1635 carry the Nuclear localization signal motif; it reads PQSRRTR. K1644 is modified (N6-methyllysine). Residues S1652, S1666, and S1715 each carry the phosphoserine modification. A compositionally biased stretch (basic and acidic residues) spans 1665-1679; that stretch reads RSAEEGELAESKSSQ. A Nuclear localization signal motif is present at residues 1723–1729; the sequence is KLKKKKV.

Binds to the ANK repeat domain of TNKS1 and TNKS2. Post-translationally, ADP-ribosylated by TNKS1 (in vitro). Detected in testis, ovary, lung, skeletal muscle, heart, prostate and pancreas, and at very low levels in brain and peripheral blood leukocytes.

The protein localises to the nucleus. It localises to the cytoplasm. The protein resides in the cytoskeleton. It is found in the chromosome. The protein is 182 kDa tankyrase-1-binding protein (TNKS1BP1) of Homo sapiens (Human).